A 201-amino-acid polypeptide reads, in one-letter code: Ras-related protein Rab-1C (201 aa).

The interval 1-20 (MGCSPSKEGNGSFSSTSTSF) is disordered. Glycine 2 carries N-myristoyl glycine lipidation. Cysteine 3 is lipidated: S-palmitoyl cysteine. GTP contacts are provided by residues 40–48 (GDSGVGKSC), 58–65 (FTDSYIST), 88–92 (DTAGQ), 146–149 (NKCD), and 176–178 (SAK). An Effector region motif is present at residues 62-70 (YISTIGVDF).

Belongs to the small GTPase superfamily. Rab family. Post-translationally, although this sequence lacks the C-terminal cysteine motifs subject to isoprenylation in other Rab proteins, it does have N-terminal myristoylation and S-palmitoylation sequence motifs.

The protein is Ras-related protein Rab-1C (Rab1C) of Dictyostelium discoideum (Social amoeba).